The following is a 168-amino-acid chain: Diphosphoinositol polyphosphate phosphohydrolase 1 (168 aa).

Met-1 bears the N-acetylmethionine mark. Residues Arg-10, 18-20, and 39-41 each bind substrate; these read KKR and SSR. Residues 17–142 enclose the Nudix hydrolase domain; sequence YKKRAACLCF…KPVQASYFEA (126 aa). Mg(2+)-binding residues include Gly-50 and Glu-66. The short motif at 51–72 is the Nudix box element; it reads GGMEPEEEPSVAAVREVCEEAG. Catalysis depends on Glu-69, which acts as the Proton acceptor. Glu-70 is a binding site for Mg(2+). Substrate is bound by residues 89–91, Arg-115, and Lys-133; that span reads RKH.

The protein belongs to the Nudix hydrolase family. DIPP subfamily. Monomer. Mg(2+) is required as a cofactor. The cofactor is Mn(2+). Zn(2+) serves as cofactor.

Its subcellular location is the cytoplasm. It localises to the nucleus. The catalysed reaction is diphospho-myo-inositol polyphosphate + H2O = myo-inositol polyphosphate + phosphate.. It catalyses the reaction 5-diphospho-1D-myo-inositol 1,2,3,4,6-pentakisphosphate + H2O = 1D-myo-inositol hexakisphosphate + phosphate + H(+). The enzyme catalyses 3,5-bis(diphospho)-1D-myo-inositol 1,2,4,6-tetrakisphosphate + H2O = 3-diphospho-1D-myo-inositol 1,2,4,5,6-pentakisphosphate + phosphate + 2 H(+). It carries out the reaction [phosphate](n+1) + n H2O = (n+1) phosphate + n H(+). The catalysed reaction is P(1),P(5)-bis(5'-adenosyl) pentaphosphate + H2O = ADP + ATP + 2 H(+). It catalyses the reaction P(1),P(6)-bis(5'-adenosyl) hexaphosphate + H2O = 2 ATP + 2 H(+). The enzyme catalyses P(1),P(4)-bis(5'-adenosyl) tetraphosphate + H2O = AMP + ATP + 2 H(+). It carries out the reaction a 5'-end (N(7)-methyl 5'-triphosphoguanosine)-ribonucleoside in mRNA + H2O = N(7)-methyl-GMP + a 5'-end diphospho-ribonucleoside in mRNA + 2 H(+). The catalysed reaction is a 5'-end (N(7)-methyl 5'-triphosphoguanosine)-ribonucleoside in mRNA + H2O = N(7)-methyl-GDP + a 5'-end phospho-ribonucleoside in mRNA + 2 H(+). Diphosphoinositol polyphosphate phosphohydrolase is inhibited by fluoride and InsP6. Its function is as follows. Cleaves a beta-phosphate from the diphosphate groups in PP-InsP5 (diphosphoinositol pentakisphosphate) and [PP]2-InsP4 (bisdiphosphoinositol tetrakisphosphate), suggesting that it may play a role in signal transduction. InsP6 (inositol hexakisphosphate) is not a substrate. Acts as a negative regulator of the ERK1/2 pathway. Also able to catalyze the hydrolysis of dinucleoside oligophosphates, with diadenosine 5',5'''-P1,P6-hexaphosphate (Ap6A) and diadenosine 5',5'''- P1,P5-pentaphosphate (Ap5A) being the preferred substrates. The major reaction products are ADP and p4a from Ap6A and ADP and ATP from Ap5A. Also able to hydrolyze 5- phosphoribose 1-diphosphate. Acts as a decapping enzyme that can hydrolyze both monomethylated and unmethylated capped RNAs. Hydrolyzes monomethylated capped RNA after both the alpha- and beta-phosphates generating m7GMP + ppRNA and m7GDP + pRNA. Modulates the stability of a subset of mRNAs implicated in cell motility. Divalent cations zinc, magnesium and manganese determine its substrate specificity. Exhibits endopolyphosphatase activity in the presence of zinc ions. Exhibits diphosphoinositol polyphosphate phosphohydrolase in the presence of magnesium ions and diadenosine hexaphosphate hydrolase activity in the presence of manganese ions. Plays an important role in limiting DNA damage and maintaining cell survival upon oxidative stress via its endopolyphosphatase activity. The sequence is that of Diphosphoinositol polyphosphate phosphohydrolase 1 from Rattus norvegicus (Rat).